A 247-amino-acid chain; its full sequence is 2,3-bisphosphoglycerate-dependent phosphoglycerate mutase (247 aa).

Substrate contacts are provided by residues Arg8–Asn15, Thr21–Gly22, Arg60, Glu87–Tyr90, Lys98, Arg114–Arg115, and Gly183–Asn184. Catalysis depends on His9, which acts as the Tele-phosphohistidine intermediate. Glu87 (proton donor/acceptor) is an active-site residue.

It belongs to the phosphoglycerate mutase family. BPG-dependent PGAM subfamily.

It catalyses the reaction (2R)-2-phosphoglycerate = (2R)-3-phosphoglycerate. Its pathway is carbohydrate degradation; glycolysis; pyruvate from D-glyceraldehyde 3-phosphate: step 3/5. Its function is as follows. Catalyzes the interconversion of 2-phosphoglycerate and 3-phosphoglycerate. The chain is 2,3-bisphosphoglycerate-dependent phosphoglycerate mutase from Hydrogenobaculum sp. (strain Y04AAS1).